A 215-amino-acid chain; its full sequence is Ras-like GTP-binding protein RHO1 (215 aa).

The GTP site is built by alanine 30, valine 31, glycine 32, lysine 33, threonine 34, and cysteine 35. Threonine 34 lines the Mg(2+) pocket. Short sequence motifs (switch) lie at residues 43 to 54 (GEIPTAYVPTVF) and 74 to 93 (DTAG…ADSD). Threonine 52 contributes to the Mg(2+) binding site. Residues aspartate 135 and serine 166 each coordinate GTP. The tract at residues 194 to 215 (VTTQAKSQESTQQKKKSKCLLQ) is disordered. Residues 195 to 204 (TTQAKSQEST) show a composition bias toward low complexity. Positions 206-215 (QKKKSKCLLQ) are enriched in basic residues. The residue at position 212 (cysteine 212) is a Cysteine methyl ester. The S-geranylgeranyl cysteine moiety is linked to residue cysteine 212. The propeptide at 213-215 (LLQ) is removed in mature form.

It belongs to the small GTPase superfamily. Rho family. As to quaternary structure, interacts (GTP-bound form) with formin1 (via GBD/FH3 domain); the interaction activates formin1. Interacts (GTP-bound form) with profilin1. Interacts (GDP-bound form and when prenylated) with RhoGDI. Mg(2+) is required as a cofactor.

Its subcellular location is the cell membrane. The protein localises to the cytoplasm. It is found in the cytoskeleton. The protein resides in the cell projection. It localises to the phagocytic cup. Its subcellular location is the cytoplasmic vesicle. The protein localises to the phagosome. It carries out the reaction GTP + H2O = GDP + phosphate + H(+). Its activity is regulated as follows. Regulated by guanine nucleotide exchange factors (GEFs) which promote the exchange of bound GDP for free GTP, GTPase activating proteins (GAPs) which increase the GTP hydrolysis activity and GDP dissociation inhibitors which inhibit the dissociation of the nucleotide from the GTPase. Small GTPase which cycles between active GTP-bound and inactive GDP-bound states. Involved in actin cytoskeleton remodeling. Regulates phagocytosis by modulating actin cytoskeleton dynamics through the recruitment of formin1 and profilin1 to the phagocytosis nucleation site. The chain is Ras-like GTP-binding protein RHO1 from Entamoeba histolytica (strain ATCC 30459 / HM-1:IMSS / ABRM).